The following is a 792-amino-acid chain: Lon protease (792 aa).

Residues 16–208 form the Lon N-terminal domain; the sequence is LPILPLRETV…KVTYYLTREL (193 aa). ATP is bound at residue 360-367; that stretch reads GPPGVGKT. Residues 597–778 enclose the Lon proteolytic domain; it reads KDEVGVATGL…DEVLNLALLE (182 aa). Active-site residues include S684 and K727.

It belongs to the peptidase S16 family. In terms of assembly, homohexamer. Organized in a ring with a central cavity.

The protein localises to the cytoplasm. It catalyses the reaction Hydrolysis of proteins in presence of ATP.. Its function is as follows. ATP-dependent serine protease that mediates the selective degradation of mutant and abnormal proteins as well as certain short-lived regulatory proteins. Required for cellular homeostasis and for survival from DNA damage and developmental changes induced by stress. Degrades polypeptides processively to yield small peptide fragments that are 5 to 10 amino acids long. Binds to DNA in a double-stranded, site-specific manner. This Dictyoglomus thermophilum (strain ATCC 35947 / DSM 3960 / H-6-12) protein is Lon protease.